The following is a 129-amino-acid chain: Sulfurtransferase TusD (129 aa).

The Cysteine persulfide intermediate role is filled by C79.

It belongs to the DsrE/TusD family. As to quaternary structure, heterohexamer, formed by a dimer of trimers. The hexameric TusBCD complex contains 2 copies each of TusB, TusC and TusD. The TusBCD complex interacts with TusE.

It localises to the cytoplasm. Its function is as follows. Part of a sulfur-relay system required for 2-thiolation of 5-methylaminomethyl-2-thiouridine (mnm(5)s(2)U) at tRNA wobble positions. Accepts sulfur from TusA and transfers it in turn to TusE. The sequence is that of Sulfurtransferase TusD from Pectobacterium carotovorum subsp. carotovorum (strain PC1).